We begin with the raw amino-acid sequence, 2248 residues long: Zinc finger protein lin-13 (2248 aa).

The interval Met-1–Pro-189 is disordered. A compositionally biased stretch (polar residues) spans Gln-29 to Pro-38. A compositionally biased stretch (basic and acidic residues) spans Lys-54 to Glu-92. The span at Glu-145 to Glu-155 shows a compositional bias: acidic residues. The Required for interaction with hpl-2 isoform a signature appears at Pro-440–Val-444. The segment at His-503–His-525 adopts a C2H2-type 1 zinc-finger fold. Residues Lys-603–Arg-665 are disordered. Positions Lys-605–Ser-620 are enriched in basic and acidic residues. C2H2-type zinc fingers lie at residues Val-812 to His-837, Tyr-959 to His-982, Leu-1140 to His-1162, Phe-1556 to His-1578, Trp-1601 to His-1623, and Tyr-1657 to His-1680. Over residues Pro-1859 to Gly-1877 the composition is skewed to polar residues. Residues Pro-1859–Gln-1900 form a disordered region.

Interacts (via PLVPV motif) with chromobox protein homolog hpl-2 (via chromo (shadow subtype) domain); the interaction is direct and influences localization of hpl-2 to nuclear foci. In the L3 stage, expressed in syncytial hypodermal cell 7, body wall muscles, intestinal cells, distal tip cells and many neurons.

The protein resides in the nucleus. In terms of biological role, involved in repression of vulval fate, possibly by a tumor suppressor protein Rb-mediated mechanism. May act in a common pathway with retinoblastoma-like protein homolog lin-35 and hpl-2 to influence the ER stress response in the intestine. Plays a role in recruiting chromobox protein homolog hpl-2 to specific chromatin sites. The sequence is that of Zinc finger protein lin-13 (lin-13) from Caenorhabditis elegans.